Consider the following 243-residue polypeptide: Venom nerve growth factor 2 (243 aa).

Residues 1–18 (MSMLCYTLIIAFLIGIWA) form the signal peptide. Positions 19 to 125 (APKSEDNVPL…TLNRNIRAKR (107 aa)) are excised as a propeptide. Positions 47 to 66 (GLKTSRNTDQRHPAPKKAED) are enriched in basic and acidic residues. The tract at residues 47–67 (GLKTSRNTDQRHPAPKKAEDQ) is disordered. Intrachain disulfides connect cysteine 139-cysteine 204 and cysteine 192-cysteine 234. An N-linked (GlcNAc...) asparagine glycan is attached at asparagine 148.

It belongs to the NGF-beta family. Homodimer; non-covalently linked. As to expression, expressed by the venom gland.

It localises to the secreted. Functionally, nerve growth factor is important for the development and maintenance of the sympathetic and sensory nervous systems. It stimulates division and differentiation of sympathetic and embryonic sensory neurons as well as basal forebrain cholinergic neurons in the brain. Its relevance in the snake venom is not clear. However, it has been shown to inhibit metalloproteinase-dependent proteolysis of platelet glycoprotein Ib alpha, suggesting a metalloproteinase inhibition to prevent metalloprotease autodigestion and/or protection against prey proteases. Binds a lipid between the two protein chains in the homodimer. The lipid-bound form promotes histamine relase from mouse mast cells, contrary to the lipid-free form. The chain is Venom nerve growth factor 2 from Pseudonaja textilis (Eastern brown snake).